Here is a 407-residue protein sequence, read N- to C-terminus: Imidazolonepropionase (407 aa).

Histidine 75 and histidine 77 together coordinate Fe(3+). 2 residues coordinate Zn(2+): histidine 75 and histidine 77. Arginine 84, tyrosine 142, and histidine 169 together coordinate 4-imidazolone-5-propanoate. Residue tyrosine 142 coordinates N-formimidoyl-L-glutamate. Position 232 (histidine 232) interacts with Fe(3+). Zn(2+) is bound at residue histidine 232. Glutamine 235 is a binding site for 4-imidazolone-5-propanoate. Position 306 (aspartate 306) interacts with Fe(3+). Aspartate 306 lines the Zn(2+) pocket. Residues asparagine 308 and glycine 310 each contribute to the N-formimidoyl-L-glutamate site. Threonine 311 lines the 4-imidazolone-5-propanoate pocket.

The protein belongs to the metallo-dependent hydrolases superfamily. HutI family. It depends on Zn(2+) as a cofactor. Requires Fe(3+) as cofactor.

It localises to the cytoplasm. It catalyses the reaction 4-imidazolone-5-propanoate + H2O = N-formimidoyl-L-glutamate. It functions in the pathway amino-acid degradation; L-histidine degradation into L-glutamate; N-formimidoyl-L-glutamate from L-histidine: step 3/3. Catalyzes the hydrolytic cleavage of the carbon-nitrogen bond in imidazolone-5-propanoate to yield N-formimidoyl-L-glutamate. It is the third step in the universal histidine degradation pathway. The polypeptide is Imidazolonepropionase (Rhodococcus jostii (strain RHA1)).